Consider the following 763-residue polypeptide: DNA-binding protein SATB1 (763 aa).

Over residues 1–15 the composition is skewed to basic and acidic residues; sequence MDHLNEATQGKEHSE. Residues 1–54 form a disordered region; the sequence is MDHLNEATQGKEHSEMSNNVSDPKGPPAKIARLEQNGSPLGRGRLGSTGAKMQG. The Nuclear localization signal signature appears at 20-40; it reads VSDPKGPPAKIARLEQNGSPL. Lys51 participates in a covalent cross-link: Glycyl lysine isopeptide (Lys-Gly) (interchain with G-Cter in SUMO2). The 102-residue stretch at 71–172 folds into the CMP domain; the sequence is GTMLPVFCVV…VVTLKIQLHS (102 aa). Position 136 is an N6-acetyllysine (Lys136). The Protein interaction signature appears at 139-143; that stretch reads PVPLS. Positions 175–248 constitute a CUTL domain; sequence KLEDLPPEQW…WYKHFKKTKD (74 aa). Position 185 is a phosphoserine (Ser185). The segment at 224–278 is nuclear matrix targeting sequence (NMTS); it reads YYANVSAAKCQEFGRWYKHFKKTKDMMVEMDSLSELSQQGANHVNFGQQPVPGNT. Positions 266–296 are enriched in polar residues; sequence HVNFGQQPVPGNTAEQPPSPAQLSHGSQPSV. The interval 266–307 is disordered; sequence HVNFGQQPVPGNTAEQPPSPAQLSHGSQPSVRTPLPNLHPGL. DNA-binding regions (CUT) lie at residues 361–448 and 484–571; these read LEQQ…QDER and NGKP…EQES. Residues Gln390, 400–410, and Asn425 contribute to the DNA site; that span reads RTQGLLSEILR. A compositionally biased stretch (low complexity) spans 591–607; it reads QIQQQQQQQQQQQQQQQ. The tract at residues 591-649 is disordered; sequence QIQQQQQQQQQQQQQQQAPPPPQPQQQPQTGPRLPPRQPTVASPAESDEENRQKTRPRT. Ser637 is subject to Phosphoserine. Residues 645–704 constitute a DNA-binding region (homeobox); sequence TRPRTKISVEALGILQSFIQDVGLYPDEEAIQTLSAQLDLPKYTIIKFFQNQRYYLKHHG. A Glycyl lysine isopeptide (Lys-Gly) (interchain with G-Cter in SUMO) cross-link involves residue Lys744.

It belongs to the CUT homeobox family. As to quaternary structure, interacts with CUX1 (via DNA-binding domains); the interaction inhibits the attachment of both proteins to DNA. Homodimer. Part of the nuclear protein complex gamma-globin promoter and enhancer binding factor (gamma-PE) composed at least of SATB1 and HOXB2. Interaction with CtBP1 when not acetylated stabilizes attachment to DNA and promotes transcription repression. Interacts with PCAF. Interacts with sumoylated PML and HDAC1 via the CMP domain. Interacts also with DYNLT3 and POLR2J2. Binds to EP300. In terms of assembly, (Microbial infection) Interacts (via the CMP domain) with HIV-1 Tat. In terms of processing, sumoylated. Sumoylation promotes cleavage by caspases. Post-translationally, phosphorylated by PKC. Acetylated by PCAF. Phosphorylated form interacts with HDAC1, but unphosphorylated form interacts with PCAF. DNA binding properties are activated by phosphorylation and inactivated by acetylation. In opposition, gene expression is down-regulated by phosphorylation but up-regulated by acetylation. Cleaved at Asp-254 by caspase-3 and caspase-6 during T-cell apoptosis in thymus and during B-cell stimulation. The cleaved forms cannot dimerize and lose transcription regulation function because of impaired DNA and chromatin association. Expressed predominantly in thymus.

The protein resides in the nucleus matrix. It is found in the nucleus. It localises to the PML body. Its function is as follows. Crucial silencing factor contributing to the initiation of X inactivation mediated by Xist RNA that occurs during embryogenesis and in lymphoma. Binds to DNA at special AT-rich sequences, the consensus SATB1-binding sequence (CSBS), at nuclear matrix- or scaffold-associated regions. Thought to recognize the sugar-phosphate structure of double-stranded DNA. Transcriptional repressor controlling nuclear and viral gene expression in a phosphorylated and acetylated status-dependent manner, by binding to matrix attachment regions (MARs) of DNA and inducing a local chromatin-loop remodeling. Acts as a docking site for several chromatin remodeling enzymes (e.g. PML at the MHC-I locus) and also by recruiting corepressors (HDACs) or coactivators (HATs) directly to promoters and enhancers. Modulates genes that are essential in the maturation of the immune T-cell CD8SP from thymocytes. Required for the switching of fetal globin species, and beta- and gamma-globin genes regulation during erythroid differentiation. Plays a role in chromatin organization and nuclear architecture during apoptosis. Interacts with the unique region (UR) of cytomegalovirus (CMV). Alu-like motifs and SATB1-binding sites provide a unique chromatin context which seems preferentially targeted by the HIV-1 integration machinery. Moreover, HIV-1 Tat may overcome SATB1-mediated repression of IL2 and IL2RA (interleukin) in T-cells by binding to the same domain than HDAC1. Delineates specific epigenetic modifications at target gene loci, directly up-regulating metastasis-associated genes while down-regulating tumor-suppressor genes. Reprograms chromatin organization and the transcription profiles of breast tumors to promote growth and metastasis. Promotes neuronal differentiation of neural stem/progenitor cells in the adult subventricular zone, possibly by positively regulating the expression of NEUROD1. The sequence is that of DNA-binding protein SATB1 from Homo sapiens (Human).